We begin with the raw amino-acid sequence, 157 residues long: Neutrophil recruitment protein (157 aa).

A signal peptide spans 1-19; sequence MCSIWLTFFLSFLILNTKA.

This sequence belongs to the PBP/GOBP family. In terms of assembly, interacts with mouse TLR1; the interaction promotes activation of canonical NF-kappa-B signaling in host macrophages. Interacts with human TLR1. Interacts with mouse TLR4; the interaction promotes activation of canonical NF-kappa-B signaling in host macrophages. Interacts with human TLR4. Female salivary gland (at protein level).

Its subcellular location is the secreted. In terms of biological role, activates MyD88-dependent canonical NF-kappa-B signaling in host macrophages via interaction with host TLR1 and TLR4; this drives the expression of neutrophil chemoattractants, followed by the subsequent influx of neutrophils and recruitment of myeloid cells at the bite site. Functionally, (Microbial infection) Promotes Zika virus infection in mouse model by facilitating recruitment of flavivirus-permissive myeloid cells at the bite site. Its function is as follows. (Microbial infection) Promotes dengue virus infection in mouse model by facilitating recruitment of flavivirus-permissive myeloid cells at the bite site. This Aedes aegypti (Yellowfever mosquito) protein is Neutrophil recruitment protein.